A 26-amino-acid polypeptide reads, in one-letter code: Turripeptide OL49 (26 aa).

Contains 3 disulfide bonds. As to expression, expressed by the venom duct.

The protein resides in the secreted. Its function is as follows. Acts as a neurotoxin by inhibiting an ion channel. This Iotyrris olangoensis (Sea snail) protein is Turripeptide OL49.